We begin with the raw amino-acid sequence, 320 residues long: Porphobilinogen deaminase (320 aa).

Cysteine 248 is subject to S-(dipyrrolylmethanemethyl)cysteine.

It belongs to the HMBS family. Monomer. It depends on dipyrromethane as a cofactor.

The enzyme catalyses 4 porphobilinogen + H2O = hydroxymethylbilane + 4 NH4(+). It functions in the pathway porphyrin-containing compound metabolism; protoporphyrin-IX biosynthesis; coproporphyrinogen-III from 5-aminolevulinate: step 2/4. The protein operates within porphyrin-containing compound metabolism; chlorophyll biosynthesis. Tetrapolymerization of the monopyrrole PBG into the hydroxymethylbilane pre-uroporphyrinogen in several discrete steps. The sequence is that of Porphobilinogen deaminase from Synechococcus elongatus (strain ATCC 33912 / PCC 7942 / FACHB-805) (Anacystis nidulans R2).